The chain runs to 529 residues: Probable serine carboxypeptidase ARB_06414 (529 aa).

The N-terminal stretch at 1 to 19 (MRGLSYFVLALSAIDAAAA) is a signal peptide. The segment at 171-191 (PTDDNPSRPVGTGFSQGKPSV) is disordered. Ser-225 is an active-site residue. 2 N-linked (GlcNAc...) asparagine glycosylation sites follow: Asn-284 and Asn-377. Asp-434 is a catalytic residue. Asn-440 and Asn-448 each carry an N-linked (GlcNAc...) asparagine glycan. The active site involves His-503.

Belongs to the peptidase S10 family.

It is found in the secreted. In terms of biological role, removes acidic, neutral and basic amino acids as well as proline from the C-terminal position. The polypeptide is Probable serine carboxypeptidase ARB_06414 (Arthroderma benhamiae (strain ATCC MYA-4681 / CBS 112371) (Trichophyton mentagrophytes)).